Here is a 349-residue protein sequence, read N- to C-terminus: N-acetyltaurine hydrolase (349 aa).

The a divalent metal cation site is built by H26, H28, E169, H201, H230, and D298.

The protein belongs to the metallo-dependent hydrolases superfamily. Phosphotriesterase family. A divalent metal cation is required as a cofactor.

It is found in the cytoplasm. The protein localises to the cytosol. It carries out the reaction N-acetyltaurine + H2O = taurine + acetate. The enzyme catalyses N-propanoyltaurine + H2O = propanoate + taurine. It catalyses the reaction N-acetyl-L-methionine + H2O = L-methionine + acetate. The catalysed reaction is N-acetyl-L-isoleucine + H2O = L-isoleucine + acetate. It carries out the reaction N-acetyl-L-leucine + H2O = L-leucine + acetate. The enzyme catalyses N-acetyl-L-valine + H2O = L-valine + acetate. Functionally, N-acetyltaurine hydrolase that regulates feeding by catalyzing the hydrolysis of N-acetyltaurine into taurine and acetate. N-acetyltaurine has anorexigenic and anti-obesity effects that are dependent on GFRAL receptor and GDF15. PTER also acts on other N-acetyl amino acids (Met, Ile, Leu, Val) and N-propionyltaurine, but at lower rates. This is N-acetyltaurine hydrolase from Homo sapiens (Human).